The primary structure comprises 1086 residues: Isoleucine--tRNA ligase (1086 aa).

The 'HIGH' region motif lies at 53-63; it reads PFANGLPHYGH. A 'KMSKS' region motif is present at residues 624-628; the sequence is KLSKR. Lys-627 lines the ATP pocket.

It belongs to the class-I aminoacyl-tRNA synthetase family. IleS type 2 subfamily. Monomer. It depends on Zn(2+) as a cofactor.

The protein localises to the cytoplasm. It carries out the reaction tRNA(Ile) + L-isoleucine + ATP = L-isoleucyl-tRNA(Ile) + AMP + diphosphate. Catalyzes the attachment of isoleucine to tRNA(Ile). As IleRS can inadvertently accommodate and process structurally similar amino acids such as valine, to avoid such errors it has two additional distinct tRNA(Ile)-dependent editing activities. One activity is designated as 'pretransfer' editing and involves the hydrolysis of activated Val-AMP. The other activity is designated 'posttransfer' editing and involves deacylation of mischarged Val-tRNA(Ile). The polypeptide is Isoleucine--tRNA ligase (Rickettsia typhi (strain ATCC VR-144 / Wilmington)).